The primary structure comprises 720 residues: MNHQNLLVELFVEELPPKALQKLGDAFAGVLLEQLQAQGLTSAHSQLTAFASPRRLAAHITEVLPAAADKAVSQKLMPVAVGLDASGQPTPALLKKLAALGADAASVPQLKRVHDGKAEVLFFESMAKGALLADGLQKALDEAIAKLPIPKVMRYQLQDGWTSVHFVRPAHGLVALHGSEVLVGVQALGLTAGNTTHGHRFEASVDPVVIQSADSYAEQLRSEGAVIASFAERRAEIARQLQAAADRVGGGVRPIDDDALLDEVTALVERPNVLVCEFEKDFLAVPQECLILTMKANQKYFPLLDAEGKLTHQFLVVSNISPQDASAVIQGNERVVRPRLADAKFFFDQDRKKTLVSRVDQLAKVVYHNKLGTQGERVERVRHIAKAIATQLFTALAQGNAALDSQEGEIAQDYLLTCVDNAALLAKTDLVTDMVGEFPELQGIMGGYYAVSDGLPDEVAHAIEDHYKPRFAGDALPRENVGVVVALADKLETLVGMFGIGNLPTGDRDPFALRRHALGVIRMLVEKELPLDLDALLASAVPAFGDKIEDTSAQLADFIYDRLAGSLREQGYSAQEVDAVIALRPQRLALVPRQIEAVRAFATLEQAPALAAANKRVTNILKKAGEVDPHVNEELLQEPAEKDLYAALQRFVPEANAQFDSGDYTASLQTLAVLRAPVDAFFDDVMVNAEELALRLNRQGLLKKLHMAMNRVADLSRLAV.

The protein belongs to the class-II aminoacyl-tRNA synthetase family. Tetramer of two alpha and two beta subunits.

The protein resides in the cytoplasm. The enzyme catalyses tRNA(Gly) + glycine + ATP = glycyl-tRNA(Gly) + AMP + diphosphate. This chain is Glycine--tRNA ligase beta subunit, found in Acidovorax ebreus (strain TPSY) (Diaphorobacter sp. (strain TPSY)).